A 211-amino-acid polypeptide reads, in one-letter code: Adenylate kinase (211 aa).

Residue 10–15 (GAGKGT) participates in ATP binding. The interval 30–59 (STGGILRAAIQKQTALGKKVQKVVEVGGLV) is NMP. Residues Thr-31, Arg-36, 57-59 (GLV), 85-88 (GFPR), and Gln-92 each bind AMP. The segment at 121–158 (GRRVCSACGSSYHVLFAQPKREGVCDRCRGVLVVREDD) is LID. Arg-122 is a binding site for ATP. Residues Cys-125 and Cys-128 each contribute to the Zn(2+) site. ATP is bound at residue 131 to 132 (SY). Positions 145 and 148 each coordinate Zn(2+). Residues Arg-155 and Arg-166 each contribute to the AMP site. Pro-194 lines the ATP pocket.

This sequence belongs to the adenylate kinase family. As to quaternary structure, monomer.

Its subcellular location is the cytoplasm. It catalyses the reaction AMP + ATP = 2 ADP. It functions in the pathway purine metabolism; AMP biosynthesis via salvage pathway; AMP from ADP: step 1/1. Functionally, catalyzes the reversible transfer of the terminal phosphate group between ATP and AMP. Plays an important role in cellular energy homeostasis and in adenine nucleotide metabolism. This is Adenylate kinase from Treponema pallidum (strain Nichols).